We begin with the raw amino-acid sequence, 651 residues long: MTFLIKRETQVDQILRDIRAVVNQMVPKEAKITEIEFEGPELVIYVKNPEAIMKDGELIKDLAKVLKKRISVRPDPEVLLPPEEAEKLIFEIVPKEAEITNIAFDPSVGEVLIEAKKPGLVIGKNGETLRLITQKVKWAPKVVRTPPLQSQTIYSIRQILQTESKDRRKFLRQVGRNIYRKPEYKSRWIRITGLGGFREVGRSALLVQTDESFVLVDFGVNVAMLNDPYKAFPHFDAPEFQYVLREGLLDAIIITHAHLDHCGMLPYLFRYNLFDGPIYTTPPTRDLMVLLQKDFIEIQQSNGQDPLYRPRDIKEVIKHTITLDYGEVRDISPDIRLTLHNAGHILGSAIVHLHIGNGLHNIAITGDFKFIPTRLLEPANAKFPRLETLVMESTYGGANDIQMPREEAEKRLIEVIHNTIKRGGKVLIPAMAVGRAQEVMMVLEEYARIGGIEVPIYLDGMIWEATAIHTAYPEYLSRRLREQIFKEGYNPFLSEIFHPVANSRERQDIIDSNEPAIIIASSGMLVGGPSVEYFKQLAPDPKNSIIFVSYQAEGTLGRQVQSGIREIPMVGEEGRTEVIKVNMEVHTIDGFSGHADRRELMNYVAKVRPRPERIITVHGEPQKCLDLATSIHRKFGISTRAPNNLDTIRLR.

The interval 1–200 is archaeal CPSF-KH domain; it reads MTFLIKRETQ…ITGLGGFREV (200 aa). Positions 12–79 are KHa; that stretch reads DQILRDIRAV…ISVRPDPEVL (68 aa). The interval 80 to 147 is KHb; it reads LPPEEAEKLI…WAPKVVRTPP (68 aa). The tract at residues 188–398 is metallo-beta-lactamase N-terminus; the sequence is WIRITGLGGF…LVMESTYGGA (211 aa). His256, His258, Asp260, His261, His344, and Asp367 together coordinate Zn(2+). The beta-Casp stretch occupies residues 399-592; sequence NDIQMPREEA…MEVHTIDGFS (194 aa). The tract at residues 593-651 is metallo-beta-lactamase C-terminus; sequence GHADRRELMNYVAKVRPRPERIITVHGEPQKCLDLATSIHRKFGISTRAPNNLDTIRLR. His618 serves as a coordination point for Zn(2+).

This sequence belongs to the metallo-beta-lactamase superfamily. RNA-metabolizing metallo-beta-lactamase-like family. FttA subfamily. In terms of assembly, homodimer. Interacts with RNA polymerase (RNAP), interacts with the Spt4-Spt5 complex. Requires Zn(2+) as cofactor.

Its function is as follows. Terminates transcription on the whole genome. Termination is linked to FttA-mediated RNA cleavage and does not require NTP hydrolysis. Cleaves endonucleolytically at the RNA exit channel of RNA polymerase (RNAP); the 5'-3' exonuclease activity of this protein degrades the nascent RNA released from RNAP. Has nuclease activity on single-stranded RNA. The polypeptide is Transcription termination factor FttA (Pyrococcus horikoshii (strain ATCC 700860 / DSM 12428 / JCM 9974 / NBRC 100139 / OT-3)).